The chain runs to 469 residues: Putative dipeptidase SAB1611c (469 aa).

His-84 serves as a coordination point for Zn(2+). Residue Asp-86 is part of the active site. Asp-115 serves as a coordination point for Zn(2+). Glu-149 serves as the catalytic Proton acceptor. Zn(2+)-binding residues include Glu-150, Asp-173, and His-440.

Belongs to the peptidase M20A family. Requires Zn(2+) as cofactor.

The sequence is that of Putative dipeptidase SAB1611c from Staphylococcus aureus (strain bovine RF122 / ET3-1).